The chain runs to 403 residues: Digeranylgeranylglycerophospholipid reductase 1 (403 aa).

Residues Ala14, Asp33, Cys44, Ala45, Gly47, Arg98, Val122, Asp277, Gly289, and Ile290 each contribute to the FAD site.

Belongs to the geranylgeranyl reductase family. DGGGPL reductase subfamily. The cofactor is FAD.

It catalyses the reaction a 2,3-bis-O-phytanyl-sn-glycerol 1-phospholipid + 8 A = a 2,3-bis-O-(geranylgeranyl)-sn-glycerol 1-phospholipid + 8 AH2. The enzyme catalyses 2,3-bis-O-(phytanyl)-sn-glycerol 1-phosphate + 8 A = 2,3-bis-O-(geranylgeranyl)-sn-glycerol 1-phosphate + 8 AH2. The catalysed reaction is CDP-2,3-bis-O-(geranylgeranyl)-sn-glycerol + 8 AH2 = CDP-2,3-bis-O-(phytanyl)-sn-glycerol + 8 A. It carries out the reaction archaetidylserine + 8 AH2 = 2,3-bis-O-phytanyl-sn-glycero-3-phospho-L-serine + 8 A. It functions in the pathway membrane lipid metabolism; glycerophospholipid metabolism. Its function is as follows. Is involved in the reduction of 2,3-digeranylgeranylglycerophospholipids (unsaturated archaeols) into 2,3-diphytanylglycerophospholipids (saturated archaeols) in the biosynthesis of archaeal membrane lipids. Catalyzes the formation of archaetidic acid (2,3-di-O-phytanyl-sn-glyceryl phosphate) from 2,3-di-O-geranylgeranylglyceryl phosphate (DGGGP) via the hydrogenation of each double bond of the isoprenoid chains. Is also probably able to reduce double bonds of geranyl groups in CDP-2,3-bis-O-(geranylgeranyl)-sn-glycerol and archaetidylserine, thus acting at various stages in the biosynthesis of archaeal membrane lipids. This chain is Digeranylgeranylglycerophospholipid reductase 1, found in Methanosphaera stadtmanae (strain ATCC 43021 / DSM 3091 / JCM 11832 / MCB-3).